Consider the following 354-residue polypeptide: Chorismate synthase (354 aa).

Position 46 (Arg46) interacts with NADP(+). Residues 123-125, 239-240, Gly284, 299-303, and Arg325 each bind FMN; these read RSS, NA, and KPVAT.

Belongs to the chorismate synthase family. In terms of assembly, homotetramer. It depends on FMNH2 as a cofactor.

The enzyme catalyses 5-O-(1-carboxyvinyl)-3-phosphoshikimate = chorismate + phosphate. It functions in the pathway metabolic intermediate biosynthesis; chorismate biosynthesis; chorismate from D-erythrose 4-phosphate and phosphoenolpyruvate: step 7/7. In terms of biological role, catalyzes the anti-1,4-elimination of the C-3 phosphate and the C-6 proR hydrogen from 5-enolpyruvylshikimate-3-phosphate (EPSP) to yield chorismate, which is the branch point compound that serves as the starting substrate for the three terminal pathways of aromatic amino acid biosynthesis. This reaction introduces a second double bond into the aromatic ring system. The chain is Chorismate synthase from Azobacteroides pseudotrichonymphae genomovar. CFP2.